We begin with the raw amino-acid sequence, 212 residues long: Probable transaldolase (212 aa).

The Schiff-base intermediate with substrate role is filled by lysine 84.

This sequence belongs to the transaldolase family. Type 3B subfamily.

The protein resides in the cytoplasm. It carries out the reaction D-sedoheptulose 7-phosphate + D-glyceraldehyde 3-phosphate = D-erythrose 4-phosphate + beta-D-fructose 6-phosphate. The protein operates within carbohydrate degradation; pentose phosphate pathway; D-glyceraldehyde 3-phosphate and beta-D-fructose 6-phosphate from D-ribose 5-phosphate and D-xylulose 5-phosphate (non-oxidative stage): step 2/3. In terms of biological role, transaldolase is important for the balance of metabolites in the pentose-phosphate pathway. The sequence is that of Probable transaldolase from Bacillus velezensis (strain DSM 23117 / BGSC 10A6 / LMG 26770 / FZB42) (Bacillus amyloliquefaciens subsp. plantarum).